A 1454-amino-acid chain; its full sequence is E3 ubiquitin-protein ligase substrate receptor MMS22 (1454 aa).

The disordered stretch occupies residues 159–178 (NSSVQSQRYDSDEEIPKKRH). The tract at residues 1201-1454 (YDEGDISRNF…SEPFKTFKNT (254 aa)) is required for interaction with MMS1.

This sequence belongs to the MMS22 family. In terms of assembly, component of a cullin-RING ligase (CRL) composed of 4 subunits: the RING protein HRT1, the cullin RTT101, a linker protein MMS1, and the substrate receptor MMS22. This complex further interacts with RTT107 and CTF4 to form RTT101-MMS1-MMS22-RTT107 and RTT101-MMS1-MMS22-CTF4 complexes respectively. Interacts (via C-ter) with MMS1 (via N-ter). Interacts with RTT107.

Its subcellular location is the nucleus. In terms of biological role, substrate targeting component of a cullin-RING-based E3 ubiquitin-protein ligase complex RTT101(MMS1-MMS22). RTT101(MMS1-MMS22) promotes fork progression through damaged DNA or natural pause sites by stabilizing replication proteins like the replication fork-pausing complex (FPC) and leading-strand polymerase at stalled replication forks. RTT101(MMS1-MMS22) ubiquitinates the acetylated histones H3K56ac-H4 at lysine residues H3K121, H3K122 and H3K125. Ubiquitination is required for efficient histone deposition during replication-coupled nucleosome assembly, probably by facilitating the transfer of H3-H4 from ASF1 to other chaperones involved in histone deposition. The polypeptide is E3 ubiquitin-protein ligase substrate receptor MMS22 (MMS22) (Saccharomyces cerevisiae (strain ATCC 204508 / S288c) (Baker's yeast)).